The primary structure comprises 1403 residues: Nidogen-2 (1403 aa).

The N-terminal stretch at 1 to 30 (MFRDPTAGWLTPPSPLSLLVMLLLLSRVGA) is a signal peptide. One can recognise an NIDO domain in the interval 108-274 (PFLADIDTSH…GVWAFHIGSR (167 aa)). Positions 323–403 (EDVEYPPVEP…KQGRPVGEGE (81 aa)) are disordered. Ser-386 and Ser-475 each carry an O-linked (Xyl...) (chondroitin sulfate) serine glycan. Positions 386–395 (SASLDPQTKQ) are enriched in polar residues. In terms of domain architecture, EGF-like 1 spans 507 to 547 (NLETCEHSHGRCSQHAFCTDYTTGFCCHCQSRFYGNGKHCL). Intrachain disulfides connect Cys-511–Cys-524, Cys-518–Cys-533, and Cys-535–Cys-546. The Nidogen G2 beta-barrel domain occupies 551 to 781 (APHRVNGKVS…GPVEVDSAPV (231 aa)). 3 N-linked (GlcNAc...) asparagine glycosylation sites follow: Asn-681, Asn-716, and Asn-726. The 42-residue stretch at 782–823 (GVNPCYDGSHTCDTTARCHPGTGVDYTCECTPGFQGDGRSCV) folds into the EGF-like 2 domain. 18 disulfide bridges follow: Cys-786-Cys-799, Cys-793-Cys-809, Cys-811-Cys-822, Cys-828-Cys-841, Cys-835-Cys-850, Cys-852-Cys-865, Cys-875-Cys-890, Cys-882-Cys-900, Cys-902-Cys-913, Cys-919-Cys-930, Cys-924-Cys-939, Cys-941-Cys-952, Cys-968-Cys-991, Cys-1002-Cys-1009, Cys-1011-Cys-1033, Cys-1047-Cys-1071, Cys-1082-Cys-1089, and Cys-1091-Cys-1112. Positions 824–862 (DVNECATGFHRCGPNSVCVNLVGSYRCECRSGYEFADDQ) constitute an EGF-like 3; calcium-binding domain. Residues 871 to 914 (PPNPCLDGSHTCAPEGQARCIHHGGSSFSCACLPGFIGTGHQCS) form the EGF-like 4 domain. An EGF-like 5; calcium-binding domain is found at 915–953 (DVDECAENRCHEAAICYNTPGSFSCRCQPGYRGDGFHCT). Positions 946-948 (RGD) match the Cell attachment site motif. Thyroglobulin type-1 domains follow at residues 965-1033 (LKPC…PPHC) and 1044-1112 (RTVC…RPAC). Residues 1021–1043 (GTQTPPGSTPPHCGPPPEPTQRP) form a disordered region. Positions 1027 to 1040 (GSTPPHCGPPPEPT) are enriched in pro residues. Residue Asn-1152 is glycosylated (N-linked (GlcNAc...) asparagine). 5 LDL-receptor class B repeats span residues 1182-1225 (RMVY…DHFR), 1226-1268 (RTMY…DPIR), 1269-1313 (GNLY…DPFS), 1314-1355 (KLLC…YADH), and 1357-1401 (YHTD…CPTG). The residue at position 1336 (Arg-1336) is an Omega-N-methylarginine.

Interacts with LAMA2. Interacts with COL13A1. Interacts with EFEMP2. In terms of processing, highly N- and O-glycosylated.

It localises to the secreted. Its subcellular location is the extracellular space. The protein localises to the extracellular matrix. The protein resides in the basement membrane. Functionally, cell adhesion glycoprotein. Might be involved in osteoblast differentiation. It probably has a role in cell-extracellular matrix interactions. The sequence is that of Nidogen-2 (Nid2) from Mus musculus (Mouse).